We begin with the raw amino-acid sequence, 508 residues long: Mu-like prophage FluMu protein gp28 (508 aa).

To phage Mu protein gp28.

The chain is Mu-like prophage FluMu protein gp28 from Haemophilus influenzae (strain ATCC 51907 / DSM 11121 / KW20 / Rd).